The following is a 119-amino-acid chain: Fluoride-specific ion channel FluC (119 aa).

Helical transmembrane passes span 5-25 (IIPL…LNLA), 30-50 (LSPA…IGIF), 59-79 (WKLL…GFSL), and 92-112 (SALA…WLGL). Na(+)-binding residues include Gly-69 and Thr-72.

Belongs to the fluoride channel Fluc/FEX (TC 1.A.43) family.

It localises to the cell inner membrane. It catalyses the reaction fluoride(in) = fluoride(out). Its activity is regulated as follows. Na(+) is not transported, but it plays an essential structural role and its presence is essential for fluoride channel function. Fluoride-specific ion channel. Important for reducing fluoride concentration in the cell, thus reducing its toxicity. In Neisseria meningitidis serogroup A / serotype 4A (strain DSM 15465 / Z2491), this protein is Fluoride-specific ion channel FluC.